The sequence spans 104 residues: MDVQTKYGAGQNKVLGGANQKKIVESEEDIALPELNPSVPQAIQRARNALKMTQKELAFKINERPGVINEYESGSAIPSQAVLSKLEKALNVKLRGKEIGKPLK.

Residues 43 to 97 (IQRARNALKMTQKELAFKINERPGVINEYESGSAIPSQAVLSKLEKALNVKLRGK) enclose the HTH cro/C1-type domain. The segment at residues 54 to 73 (QKELAFKINERPGVINEYES) is a DNA-binding region (H-T-H motif).

The protein is Vegetative-specific protein H7 (cinD-1) of Dictyostelium discoideum (Social amoeba).